Consider the following 142-residue polypeptide: Large ribosomal subunit protein uL13 (142 aa).

Belongs to the universal ribosomal protein uL13 family. Part of the 50S ribosomal subunit.

Functionally, this protein is one of the early assembly proteins of the 50S ribosomal subunit, although it is not seen to bind rRNA by itself. It is important during the early stages of 50S assembly. In Pseudomonas aeruginosa (strain LESB58), this protein is Large ribosomal subunit protein uL13.